A 59-amino-acid polypeptide reads, in one-letter code: Putative potassium channel toxin Ts23 (59 aa).

The first 22 residues, 1–22, serve as a signal peptide directing secretion; sequence MKAFYGILIIFILISMLDLSQQ. 3 disulfides stabilise this stretch: C29-C50, C35-C55, and C39-C57.

It belongs to the short scorpion toxin superfamily. Potassium channel inhibitor family. Alpha-KTx 04 subfamily. In terms of tissue distribution, expressed by the venom gland.

The protein localises to the secreted. Its function is as follows. Potently blocks Kv1.1/KCNA1 (85%), Kv1.2/KCNA2 (91%), Kv1.3/KCNA3 (89%), Kv1.6/KCNA6 (94%), and Shaker (97%). The protein is Putative potassium channel toxin Ts23 of Tityus serrulatus (Brazilian scorpion).